The following is a 267-amino-acid chain: LexA repressor (267 aa).

The disordered stretch occupies residues 1 to 44 (MSIDESSDNPTPRPKLGRPPKSEADKRAEKEAQKDGKKPALSTR). A compositionally biased stretch (basic and acidic residues) spans 20–38 (PKSEADKRAEKEAQKDGKK). The H-T-H motif DNA-binding region spans 65–85 (IREIADAVGLHSTSSVSYHLT). Positions 111–140 (GQLTNESTKKNAGSPQPTSAAIPEPTTEGE) are disordered. The segment covering 112–129 (QLTNESTKKNAGSPQPTS) has biased composition (polar residues). Active-site for autocatalytic cleavage activity residues include Ser-191 and Lys-228.

The protein belongs to the peptidase S24 family. Homodimer.

The catalysed reaction is Hydrolysis of Ala-|-Gly bond in repressor LexA.. Represses a number of genes involved in the response to DNA damage (SOS response), including recA and lexA. In the presence of single-stranded DNA, RecA interacts with LexA causing an autocatalytic cleavage which disrupts the DNA-binding part of LexA, leading to derepression of the SOS regulon and eventually DNA repair. The sequence is that of LexA repressor from Corynebacterium jeikeium (strain K411).